Here is a 305-residue protein sequence, read N- to C-terminus: GTP cyclohydrolase FolE2 (305 aa).

The protein belongs to the GTP cyclohydrolase IV family.

The enzyme catalyses GTP + H2O = 7,8-dihydroneopterin 3'-triphosphate + formate + H(+). It functions in the pathway cofactor biosynthesis; 7,8-dihydroneopterin triphosphate biosynthesis; 7,8-dihydroneopterin triphosphate from GTP: step 1/1. Functionally, converts GTP to 7,8-dihydroneopterin triphosphate. The protein is GTP cyclohydrolase FolE2 of Xanthomonas euvesicatoria pv. vesicatoria (strain 85-10) (Xanthomonas campestris pv. vesicatoria).